The following is a 399-amino-acid chain: MLAQSCCLRLLILLLLCKSTCSVWEKSHKYFRNRKLRERRIKWFGTKKTEIQPLLISTWNYTDANLQAWSVLQQGPQRTRMAVIQGCMACQNQRCGRLLAGGSSPDSEGTLTLEAAIMDGERLEYGAVAGMEGARNAILVADAVLRHTKHSLLVGKSATKFARSLGYKEEFLTDGRTKNVWKKWRSNGCQPNFWRDVRPSHTENCGPYTPLPEHLHQHPLHQEYAITQGQHDQLAFLALDAEGKLHVASQSSGAPFRIPGRVGDSAVPGAGIYADNKVGGAVASGDGDILMRHLPAFLAVEAMRAGKKPDQAAEWVVQRLLRHNTEFNGAVVVVNRRGIYAAACAGLDEFHFVVSGGKEYLSMARVERIKCLEREDEVVDDGPKGLFPTIPEKQAVPRG.

The first 22 residues, 1–22 (MLAQSCCLRLLILLLLCKSTCS), serve as a signal peptide directing secretion. 3 disulfide bridges follow: C90–C95, C189–C205, and C344–C371.

This sequence belongs to the Ntn-hydrolase family.

The protein is L-asparaginase-like protein GG20738 of Drosophila erecta (Fruit fly).